We begin with the raw amino-acid sequence, 411 residues long: Zinc metalloproteinase/disintegrin (411 aa).

An N-terminal signal peptide occupies residues methionine 1 to serine 20. Residues isoleucine 21–glutamate 190 constitute a propeptide that is removed on maturation. One can recognise a Peptidase M12B domain in the interval arginine 197–proline 395. Aspartate 284 contributes to the Ca(2+) binding site. 3 disulfide bridges follow: cysteine 308–cysteine 390, cysteine 352–cysteine 374, and cysteine 354–cysteine 357. Histidine 333 is a binding site for Zn(2+). Glutamate 334 is a catalytic residue. Zn(2+) is bound by residues histidine 337 and histidine 343. The Ca(2+) site is built by cysteine 390 and asparagine 393. The propeptide occupies leucine 396–leucine 411.

It belongs to the venom metalloproteinase (M12B) family. P-II subfamily. Monomer. Requires Zn(2+) as cofactor. In terms of tissue distribution, expressed by the venom gland.

The protein resides in the secreted. Snake venom metalloproteinase that impairs hemostasis in the envenomed animal. The chain is Zinc metalloproteinase/disintegrin from Protobothrops mucrosquamatus (Taiwan habu).